The primary structure comprises 186 residues: MSVTSIMDDLKRRMHGAISAFKHELGGLRTGRASASLLEPLTVEAYGSVVHINQVANISVPEPRMLSVSVWDKTMVGAVERAIRDSGLGLNPITDGMNLRIPLPELNEERRKELVKIAHQYAEQARVATRHVRRDGMDNLKKLEKEGEIGQDEAHGLSEKVQKLTDETIADIDKILAVKESEIMHV.

This sequence belongs to the RRF family.

It localises to the cytoplasm. Its function is as follows. Responsible for the release of ribosomes from messenger RNA at the termination of protein biosynthesis. May increase the efficiency of translation by recycling ribosomes from one round of translation to another. This chain is Ribosome-recycling factor, found in Bartonella henselae (strain ATCC 49882 / DSM 28221 / CCUG 30454 / Houston 1) (Rochalimaea henselae).